The sequence spans 304 residues: GDP-6-deoxy-D-mannose reductase (304 aa).

Residues 13-14 (FV) and 39-40 (DL) contribute to the NADP(+) site. Substrate is bound at residue 105-106 (SG). NADP(+) is bound at residue Tyr131. Substrate is bound by residues Asn160, Arg200, and 260-263 (RRAE).

Belongs to the NAD(P)-dependent epimerase/dehydratase family. GDP-6-deoxy-D-mannose reductase subfamily.

It carries out the reaction GDP-alpha-D-rhamnose + NAD(+) = GDP-4-dehydro-alpha-D-rhamnose + NADH + H(+). It catalyses the reaction GDP-alpha-D-rhamnose + NADP(+) = GDP-4-dehydro-alpha-D-rhamnose + NADPH + H(+). In terms of biological role, reductase that catalyzes the conversion of GDP-6-deoxy-D-mannose to GDP-4-dehydro-6-deoxy-D-mannose (GDP-D-rhamnose). In Pseudomonas aeruginosa (strain ATCC 15692 / DSM 22644 / CIP 104116 / JCM 14847 / LMG 12228 / 1C / PRS 101 / PAO1), this protein is GDP-6-deoxy-D-mannose reductase (rmd).